The chain runs to 225 residues: PKHD-type hydroxylase YbiX (225 aa).

A Fe2OG dioxygenase domain is found at 78 to 177; it reads TLSTPLFNRY…RVASFMWIQS (100 aa). Fe cation is bound by residues histidine 96, aspartate 98, and histidine 158. Arginine 168 provides a ligand contact to 2-oxoglutarate.

Requires Fe(2+) as cofactor. The cofactor is L-ascorbate.

In Escherichia coli O8 (strain IAI1), this protein is PKHD-type hydroxylase YbiX.